Consider the following 62-residue polypeptide: uncharacterized protein (62 aa).

Positions 28–61 (KIESTHPEIAKKLKEAAEKYREVEEILKKAVDMV) form a coiled coil.

This is an uncharacterized protein from Archaeoglobus fulgidus (strain ATCC 49558 / DSM 4304 / JCM 9628 / NBRC 100126 / VC-16).